Here is a 66-residue protein sequence, read N- to C-terminus: Large ribosomal subunit protein bL35 (66 aa).

2 stretches are compositionally biased toward basic residues: residues 1–15 (MSKL…KRFK) and 22–43 (ILHK…RKRR). Residues 1 to 43 (MSKLKTRSSAAKRFKVTATGKILHKKAGKRHNLSKKSESRKRR) form a disordered region.

Belongs to the bacterial ribosomal protein bL35 family.

The protein is Large ribosomal subunit protein bL35 of Dictyoglomus turgidum (strain DSM 6724 / Z-1310).